The following is a 187-amino-acid chain: Elongation factor P (187 aa).

Belongs to the elongation factor P family.

Its subcellular location is the cytoplasm. The protein operates within protein biosynthesis; polypeptide chain elongation. Its function is as follows. Involved in peptide bond synthesis. Stimulates efficient translation and peptide-bond synthesis on native or reconstituted 70S ribosomes in vitro. Probably functions indirectly by altering the affinity of the ribosome for aminoacyl-tRNA, thus increasing their reactivity as acceptors for peptidyl transferase. The protein is Elongation factor P of Desulfosudis oleivorans (strain DSM 6200 / JCM 39069 / Hxd3) (Desulfococcus oleovorans).